Reading from the N-terminus, the 109-residue chain is Ubiquitin-related modifier 1 homolog (109 aa).

The residue at position 109 (Gly-109) is a 1-thioglycine. Residue Gly-109 forms a Glycyl lysine isopeptide (Gly-Lys) (interchain with K-? in acceptor proteins) linkage.

This sequence belongs to the URM1 family. C-terminal thiocarboxylation occurs in 2 steps, it is first acyl-adenylated (-COAMP) via the hesA/moeB/thiF part of the MOCS3 homolog, then thiocarboxylated (-COSH) via the rhodanese domain of the MOCS3 homolog.

The protein localises to the cytoplasm. The protein operates within tRNA modification; 5-methoxycarbonylmethyl-2-thiouridine-tRNA biosynthesis. Its function is as follows. Acts as a sulfur carrier required for 2-thiolation of mcm(5)S(2)U at tRNA wobble positions of cytosolic tRNA(Lys), tRNA(Glu) and tRNA(Gln). Serves as sulfur donor in tRNA 2-thiolation reaction by being thiocarboxylated (-COSH) at its C-terminus by MOCS3. The sulfur is then transferred to tRNA to form 2-thiolation of mcm(5)S(2)U. Also acts as a ubiquitin-like protein (UBL) that is covalently conjugated via an isopeptide bond to lysine residues of target proteins. The thiocarboxylated form serves as substrate for conjugation and oxidative stress specifically induces the formation of UBL-protein conjugates. This chain is Ubiquitin-related modifier 1 homolog, found in Bombyx mori (Silk moth).